A 321-amino-acid polypeptide reads, in one-letter code: Glycerol-3-phosphate phosphatase (321 aa).

Aspartate 34 functions as the Nucleophile in the catalytic mechanism. 3 residues coordinate Mg(2+): aspartate 34, aspartate 36, and aspartate 260. Residue aspartate 36 is the Proton donor of the active site.

The protein belongs to the HAD-like hydrolase superfamily. CbbY/CbbZ/Gph/YieH family. As to quaternary structure, homodimer. The cofactor is Mg(2+). As to expression, expression was confirmed in liver, adipose tissue, testis and pancreatic islet.

It carries out the reaction O-phospho-L-tyrosyl-[protein] + H2O = L-tyrosyl-[protein] + phosphate. The enzyme catalyses sn-glycerol 1-phosphate + H2O = glycerol + phosphate. It catalyses the reaction sn-glycerol 3-phosphate + H2O = glycerol + phosphate. Functionally, glycerol-3-phosphate phosphatase hydrolyzing glycerol-3-phosphate into glycerol. Thereby, regulates the cellular levels of glycerol-3-phosphate a metabolic intermediate of glucose, lipid and energy metabolism. Was also shown to have a 2-phosphoglycolate phosphatase activity and a tyrosine-protein phosphatase activity. However, their physiological relevance is unclear. In vitro, also has a phosphatase activity toward ADP, ATP, GDP and GTP. This is Glycerol-3-phosphate phosphatase from Rattus norvegicus (Rat).